The chain runs to 600 residues: Elongation factor 4 (600 aa).

Residues 5-187 (KYIRNFSIIA…AIINKLPAPK (183 aa)) enclose the tr-type G domain. GTP is bound by residues 17–22 (DHGKST) and 134–137 (NKID).

Belongs to the TRAFAC class translation factor GTPase superfamily. Classic translation factor GTPase family. LepA subfamily.

It is found in the cell inner membrane. The catalysed reaction is GTP + H2O = GDP + phosphate + H(+). Its function is as follows. Required for accurate and efficient protein synthesis under certain stress conditions. May act as a fidelity factor of the translation reaction, by catalyzing a one-codon backward translocation of tRNAs on improperly translocated ribosomes. Back-translocation proceeds from a post-translocation (POST) complex to a pre-translocation (PRE) complex, thus giving elongation factor G a second chance to translocate the tRNAs correctly. Binds to ribosomes in a GTP-dependent manner. The protein is Elongation factor 4 of Rickettsia prowazekii (strain Madrid E).